A 189-amino-acid polypeptide reads, in one-letter code: 2-oxoglutarate synthase subunit KorC (189 aa).

In terms of assembly, heterotetramer of the KorA, KorB, KorC and KorD subunits.

The enzyme catalyses 2 oxidized [2Fe-2S]-[ferredoxin] + 2-oxoglutarate + CoA = succinyl-CoA + 2 reduced [2Fe-2S]-[ferredoxin] + CO2 + H(+). The protein is 2-oxoglutarate synthase subunit KorC (korC) of Methanothermobacter thermautotrophicus (strain ATCC 29096 / DSM 1053 / JCM 10044 / NBRC 100330 / Delta H) (Methanobacterium thermoautotrophicum).